Here is a 342-residue protein sequence, read N- to C-terminus: S-adenosylmethionine:tRNA ribosyltransferase-isomerase (342 aa).

Belongs to the QueA family. As to quaternary structure, monomer.

The protein resides in the cytoplasm. The catalysed reaction is 7-aminomethyl-7-carbaguanosine(34) in tRNA + S-adenosyl-L-methionine = epoxyqueuosine(34) in tRNA + adenine + L-methionine + 2 H(+). It participates in tRNA modification; tRNA-queuosine biosynthesis. Transfers and isomerizes the ribose moiety from AdoMet to the 7-aminomethyl group of 7-deazaguanine (preQ1-tRNA) to give epoxyqueuosine (oQ-tRNA). The protein is S-adenosylmethionine:tRNA ribosyltransferase-isomerase of Streptococcus pyogenes serotype M6 (strain ATCC BAA-946 / MGAS10394).